Here is a 54-residue protein sequence, read N- to C-terminus: uncharacterized protein (54 aa).

Residues 23–35 (DVMQEGETAKELN) show a composition bias toward basic and acidic residues. The disordered stretch occupies residues 23–54 (DVMQEGETAKELNYEGEDMQATSSAQNRQTSV). A compositionally biased stretch (polar residues) spans 42-54 (QATSSAQNRQTSV).

This is an uncharacterized protein from Bacillus subtilis (strain 168).